A 518-amino-acid chain; its full sequence is Arrestin-related trafficking adapter 10 (518 aa).

Lys118 is covalently cross-linked (Glycyl lysine isopeptide (Lys-Gly) (interchain with G-Cter in ubiquitin)).

This sequence belongs to the ART10 family. In terms of assembly, interacts with RSP5. In terms of processing, ubiquitinated by RSP5.

Its subcellular location is the cytoplasm. May regulate endocytosis by recruiting RSP5 ubiquitin ligase activity to specific plasma membrane proteins in response to extracellular stimuli. This chain is Arrestin-related trafficking adapter 10 (ART10), found in Saccharomyces cerevisiae (strain Lalvin EC1118 / Prise de mousse) (Baker's yeast).